The chain runs to 736 residues: Na(+)/H(+) antiporter NhaA (736 aa).

Residues 1 to 387 (MNHSPQSARP…ICGYLLLRAA (387 aa)) form a na(+)/H(+) antiporter NhaA region. Helical transmembrane passes span 23–43 (AGGI…NSPF), 58–78 (LSLA…LVGL), 96–116 (MLPG…FAVL), 126–146 (GWAV…SLLG), 155–175 (VFLA…IAIF), 178–198 (AEIS…LFVM), 201–221 (MDVV…FFVF), 265–285 (VAFI…FKGL), 298–318 (ILLG…WLAI), 334–354 (LYGV…IGLL), and 367–387 (IGVL…LRAA). Residues 388–736 (RPDQSAANPL…EKAIWARYGL (349 aa)) form a peptidase S49 region.

It in the N-terminal section; belongs to the NhaA Na(+)/H(+) (TC 2.A.33) antiporter family. This sequence in the C-terminal section; belongs to the peptidase S49 family.

Its subcellular location is the cell inner membrane. It catalyses the reaction Na(+)(in) + 2 H(+)(out) = Na(+)(out) + 2 H(+)(in). Na(+)/H(+) antiporter that extrudes sodium in exchange for external protons. The chain is Na(+)/H(+) antiporter NhaA from Brucella melitensis biotype 1 (strain ATCC 23456 / CCUG 17765 / NCTC 10094 / 16M).